The following is a 327-amino-acid chain: GMP reductase (327 aa).

Cys-175 acts as the Thioimidate intermediate in catalysis. Residue 204-227 (IIADGGIRTNGDVAKSIRFGATMV) coordinates NADP(+).

It belongs to the IMPDH/GMPR family. GuaC type 2 subfamily.

It carries out the reaction IMP + NH4(+) + NADP(+) = GMP + NADPH + 2 H(+). In terms of biological role, catalyzes the irreversible NADPH-dependent deamination of GMP to IMP. It functions in the conversion of nucleobase, nucleoside and nucleotide derivatives of G to A nucleotides, and in maintaining the intracellular balance of A and G nucleotides. The sequence is that of GMP reductase from Bacillus cereus (strain ZK / E33L).